The following is a 42-amino-acid chain: Photosystem I reaction center subunit IX (42 aa).

The chain crosses the membrane as a helical span at residues 7–27 (YLSVAPVLSTLWFGSLAGLLI).

This sequence belongs to the PsaJ family.

The protein localises to the plastid. It localises to the chloroplast thylakoid membrane. In terms of biological role, may help in the organization of the PsaE and PsaF subunits. This Lepidium virginicum (Virginia pepperweed) protein is Photosystem I reaction center subunit IX.